The following is a 334-amino-acid chain: Catabolite repressor/activator (334 aa).

Residues 1-58 (MKLDEIARLAGVSRTTASYVINGKAKQYRVSDKTVEKVMAVVREHNYHPNAVAAGLRA) enclose the HTH lacI-type domain. The segment at residues 3–22 (LDEIARLAGVSRTTASYVIN) is a DNA-binding region (H-T-H motif).

Homotetramer.

In terms of biological role, global transcriptional regulator, which plays an important role in the regulation of carbon metabolism. This is Catabolite repressor/activator (cra) from Escherichia coli O157:H7.